The primary structure comprises 391 residues: Tryptophan synthase beta chain (391 aa).

The residue at position 84 (Lys-84) is an N6-(pyridoxal phosphate)lysine.

The protein belongs to the TrpB family. Tetramer of two alpha and two beta chains. Pyridoxal 5'-phosphate is required as a cofactor.

It carries out the reaction (1S,2R)-1-C-(indol-3-yl)glycerol 3-phosphate + L-serine = D-glyceraldehyde 3-phosphate + L-tryptophan + H2O. It functions in the pathway amino-acid biosynthesis; L-tryptophan biosynthesis; L-tryptophan from chorismate: step 5/5. The beta subunit is responsible for the synthesis of L-tryptophan from indole and L-serine. The chain is Tryptophan synthase beta chain from Thermoanaerobacter pseudethanolicus (strain ATCC 33223 / 39E) (Clostridium thermohydrosulfuricum).